The sequence spans 751 residues: Dachshund homolog 1 (751 aa).

A disordered region spans residues 1-178; the sequence is MAVPAALIPP…PSPVENTPQN (178 aa). Composition is skewed to low complexity over residues 20–53 and 61–74; these read ISTS…SGPT and ASSA…TVTS. Composition is skewed to gly residues over residues 75–97 and 107–119; these read PGGG…GGGS and SSGG…GGGA. Low complexity predominate over residues 120–156; the sequence is SSTPITASTGSSSSSSSSSSSSSSSSSSSSSSSSSSS. A compositionally biased stretch (polar residues) spans 167–178; the sequence is STPSPVENTPQN. The interval 182-268 is DACHbox-N; it reads KMVDLRGAKV…LISRKDFETL (87 aa). The tract at residues 182 to 377 is interaction with SIX6 and HDAC3; the sequence is KMVDLRGAKV…VGSSGGSWDK (196 aa). Disordered regions lie at residues 273–295, 351–393, 467–525, and 537–556; these read TNAS…PENS, SNNQ…APVA, SPPS…RIPV, and MGLS…AGHD. 2 stretches are compositionally biased toward polar residues: residues 285-294 and 351-369; these read RTQSVTSPEN and SNNQ…SSVG. At Ser484 the chain carries Phosphoserine. The segment covering 499 to 517 has biased composition (low complexity); it reads SHPSSHRSSSVSSSPARTE. Residues 609-689 form a DACHbox-C region; that stretch reads SSIETLLTNI…KAKRKLQEAL (81 aa). The interaction with SIN3A stretch occupies residues 620-699; it reads GLLKVAIDNA…EFETKRREQA (80 aa). A coiled-coil region spans residues 623–711; that stretch reads KVAIDNARAQ…TLKQAASADS (89 aa).

This sequence belongs to the DACH/dachshund family. Interacts with SIX1, SIX6 and EYA3. Interacts with NCOR1 and HDAC3 through its N-terminus. Interacts with SIN3A through its C-terminus. Interacts with SMAD3 and SMAD4. In terms of tissue distribution, expressed at higher levels in adult kidney and lung, and at lower levels in brain and testis. Expressed in embryonal kidneys, eyes, cochleae and limb buds.

It is found in the nucleus. In terms of biological role, transcription factor that is involved in regulation of organogenesis. Seems to be a regulator of SIX1, SIX6 and probably SIX5. Corepression of precursor cell proliferation in myoblasts by SIX1 is switched to coactivation through recruitment of EYA3 to the SIX1-DACH1 complex. Transcriptional activation also seems to involve association of CREBBP. Seems to act as a corepressor of SIX6 in regulating proliferation by directly repressing cyclin-dependent kinase inhibitors, including the p27Kip1 promoter. Inhibits TGF-beta signaling through interaction with SMAD4 and NCOR1. Binds to chromatin DNA via its DACHbox-N domain. The sequence is that of Dachshund homolog 1 (Dach1) from Mus musculus (Mouse).